We begin with the raw amino-acid sequence, 944 residues long: MNNIAYKWQTRWEEDKIYESNPNPSKPKFFTTVAFPYPNSPWHIGHGRTYVTGDILARYKRMRGYNVLFPMAFHYTGTPIMAMADAIAKGDKELIETFKDIYEISPDVIPRMSDPLFMANYFKEDIKASMREIGLGIDWRREFTTIDPEFSSFVTWQFHKLQSKGYIVKDTHPVGWCPVHHIPVGMHDTKGDVEPEIGEFVLIYFNSEKGIFPAATLRPETIFGATALWINPSEMYVVASMLGKKMILSEKAAAKLSFQIDDIEIEEKIKGSKLVGLKVENPITGKHIAVLGADFVDVSLGTGVVMSVPAHAPFDYYYSKKTFKNNNIEIIPVITVEGLGNALAKDVVEKNNPKSDEDLKKLTEYVYRTEYNKGVLRSDLGNLIREEYRNELKSLGGLPVPKGRELITNFLISKGLGRKIFEVMNKPVYCRCGTEIVVKILKDQWFLDYSNKEWKELARKSLSKINVIPEESRKDFEFTIEWLEKRACARTRGLGTPLPWDKKWIIESLSDSTIYMAYYTISHKIKQYKLSPSKLTQEFWDYVMLGIGNLEEISEKTGIPSNIIKEFREEFLYWYPLDIRHSGKDLIPNHLTFFIFNHAAIFQENLWPKAIAVNGLVLYEGKKMSKSLRNIIPLRKGLKMYGVDVMRIAVSSTADMGSDVNFSESLVKTVGETLRKMYELFKSLDNYTGDILGFPEKWLLSRIYEITSSTTRHMEALELRDAVNELLFVFSSDLDEYFGMVSAEGREANNKVLREVLTIWLKLITPFAPHLAEEIWHEILKQKTYIVNEGWPEVEGSKMDELTLLEHEYMKRIVEDIRSILNIFKGTPKLIKIYALNDSRYMELLRDAIVANGQMKKFMDIHKPKSREDARILQKIFNESLEIDDKMKKLVTNYNINEVDVLNKLSKYIRRKLNVDILIEPYDEEVKKTYNKEAMPLRPAIIIE.

Positions 36–46 (PYPNSPWHIGH) match the 'HIGH' region motif. The 'KMSKS' region motif lies at 623–627 (KMSKS). Lysine 626 is a binding site for ATP.

The protein belongs to the class-I aminoacyl-tRNA synthetase family.

It localises to the cytoplasm. The enzyme catalyses tRNA(Leu) + L-leucine + ATP = L-leucyl-tRNA(Leu) + AMP + diphosphate. The polypeptide is Leucine--tRNA ligase 2 (Saccharolobus solfataricus (strain ATCC 35092 / DSM 1617 / JCM 11322 / P2) (Sulfolobus solfataricus)).